Reading from the N-terminus, the 708-residue chain is MPSATSHSGSGSKSSGPPPPSGSSGNEAGAGAAAPASQHPMTGTGAVQTEAMKQILGVIDKKLRNLEKKKGKLDDYQERMNKGERLNQDQLDAVSKYQEVTNNLEFAKELQRSFMALSQDIQKTIKKTARREQLMREEAEQKRLKTVLELQYVLDKLGDDEVRTDLKQGLNGVPILSEEELSLLDEFYKLADPERDMSLRLNEQYEHASIHLWDLLEGKEKPVCGTTYKALKEIVERVFQSNYFDSTHNHQNGLCEEEEAASAPTVEDQAAEAEPEPVEEYTEQNEVESTEYVNRQFMAETQFSSGEKEQVDDWTVETVEVVNSLQQQPQAASPSVPEPHSLTPVAQADPLVRRQRVQDLMAQMQGPYNFIQDSMLDFENQTLDPAIVSAQPMNPAQNMDIPQLVCPPVHSESRLAQPNQVSVQPEATQVPLVSSTSEGYTASQPLYQPSHATDQRPQKEPIDQIQATISLNTDQTTASSSLPAASQPQVFQAGTSKPLHSSGINVNAAPFQSMQTVFNMNAPVPPVNEPETLKQQNQYQASYNQSFSSQPHQVEQTELQQEQLQTVVGTYHGSQDQPHQVTGNHQQPPQQNTGFPRSNQPYYNSRGVSRGGSRGARGLMNGYRGPANGFRGGYDGYRPSFSTNTPNSGYTQSQFSAPRDYSGYQRDGYQQNFKRGSGQSGPRGAPRGRGGPPRPNRGMPQMNTQQVN.

Composition is skewed to low complexity over residues 1 to 15 (MPSATSHSGSGSKSS) and 22 to 37 (GSSGNEAGAGAAAPAS). The tract at residues 1-48 (MPSATSHSGSGSKSSGPPPPSGSSGNEAGAGAAAPASQHPMTGTGAVQ) is disordered. The residue at position 2 (Pro2) is an N-acetylproline. Ser10 carries the phosphoserine modification. Positions 58–92 (VIDKKLRNLEKKKGKLDDYQERMNKGERLNQDQLD) form a coiled coil. Ser113 bears the Phosphoserine mark. A coiled-coil region spans residues 123-151 (KTIKKTARREQLMREEAEQKRLKTVLELQ). Arg163 carries the omega-N-methylarginine modification. Residues 258-287 (EEAASAPTVEDQAAEAEPEPVEEYTEQNEV) are disordered. A compositionally biased stretch (acidic residues) spans 269–287 (QAAEAEPEPVEEYTEQNEV). Phosphoserine is present on residues Ser333 and Ser341. Residues 358–379 (QDLMAQMQGPYNFIQDSMLDFE) are G3BP1-binding. The span at 415–452 (LAQPNQVSVQPEATQVPLVSSTSEGYTASQPLYQPSHA) shows a compositional bias: polar residues. Disordered regions lie at residues 415–459 (LAQP…RPQK), 473–497 (TDQTTASSSLPAASQPQVFQAGTSK), 521–559 (NAPVPPVNEPETLKQQNQYQASYNQSFSSQPHQVEQTEL), and 571–708 (YHGS…QQVN). 2 stretches are compositionally biased toward low complexity: residues 475–489 (QTTASSSLPAASQPQ) and 535–559 (QQNQYQASYNQSFSSQPHQVEQTEL). Over residues 572–603 (HGSQDQPHQVTGNHQQPPQQNTGFPRSNQPYY) the composition is skewed to polar residues. Tyr623 carries the phosphotyrosine modification. Omega-N-methylarginine occurs at positions 624 and 631. Tyr634 and Tyr637 each carry phosphotyrosine. Arg638 bears the Omega-N-methylarginine mark. Polar residues predominate over residues 640-656 (SFSTNTPNSGYTQSQFS). Ser642 and Ser648 each carry an O-linked (GlcNAc) serine glycan. Phosphotyrosine occurs at positions 650, 661, 664, and 669. 2 stretches are compositionally biased toward low complexity: residues 675 to 685 (RGSGQSGPRGA) and 696 to 708 (NRGMPQMNTQQVN). At Arg697 the chain carries Asymmetric dimethylarginine; alternate. Arg697 is subject to Omega-N-methylarginine; alternate.

It belongs to the caprin family. In terms of assembly, may form homomultimers. Interacts with G3BP1; interaction is direct and promotes stress granule formation. Interacts with G3BP2; interaction is direct and promotes stress granule formation. Interacts with PQBP1. Interacts with DDX3X. Interacts (when phosphorylated by EPHA4) with FMR1; interaction with FMR1 promotes formation of a membraneless compartment. In terms of processing, tyrosine phosphorylation by EPHA4 promotes interaction with FMR1 and liquid-liquid phase separation (LLPS) for the formation of a membraneless compartment that concentrates mRNAs with associated regulatory factors. O-glycosylated (O-GlcNAcylated), in a cell cycle-dependent manner. O-glycosylation by OGT inhibit ability to undergo liquid-liquid phase separation (LLPS).

It is found in the cytoplasm. The protein resides in the cytoplasmic ribonucleoprotein granule. The protein localises to the cytosol. Its subcellular location is the cell projection. It localises to the dendrite. It is found in the lamellipodium. Ability to mediate liquid-liquid phase separation is regulated by ATP: moderate concentrations of ATP enhance phase separation, whereas high concentrations of ATP lead to inhibition of phase separation. Functionally, mRNA-binding protein that acts as a regulator of mRNAs transport, translation and/or stability, and which is involved in neurogenesis, synaptic plasticity in neurons and cell proliferation and migration in multiple cell types. Plays an essential role in cytoplasmic stress granule formation. Acts as an mRNA regulator by mediating formation of some phase-separated membraneless compartment: undergoes liquid-liquid phase separation upon binding to target mRNAs, leading to assemble mRNAs into cytoplasmic ribonucleoprotein granules that concentrate mRNAs with associated regulatory factors. Undergoes liquid-liquid phase separation following phosphorylation and interaction with FMR1, promoting formation of cytoplasmic ribonucleoprotein granules that concentrate mRNAs with factors that inhibit translation and mediate deadenylation of target mRNAs. In these cytoplasmic ribonucleoprotein granules, CAPRIN1 mediates recruitment of CNOT7 deadenylase, leading to mRNA deadenylation and degradation. Binds directly and selectively to MYC and CCND2 mRNAs. In neuronal cells, directly binds to several mRNAs associated with RNA granules, including BDNF, CAMK2A, CREB1, MAP2, NTRK2 mRNAs, as well as to GRIN1 and KPNB1 mRNAs, but not to rRNAs. The protein is Caprin-1 (CAPRIN1) of Bos taurus (Bovine).